The chain runs to 102 residues: Spexin prohormone 1 (102 aa).

Residues 1–26 (MKDLRTLAAYALALLLLATFVSHSWS) form the signal peptide. The propeptide occupies 27–35 (APKGSFQRR). At Gln49 the chain carries Glutamine amide. Residues 50–102 (GRRFVSEDRNEGDLYDTIRLESRSQNTENLSISKAAAFLLNILQQARDEDEPY) constitute a propeptide that is removed on maturation.

This sequence belongs to the spexin family. Mainly expressed in the brain and ovary. Detected bilaterally in the adult brainstem. Expressed in neurons in the dorsal habenula (dHb). In the dHb some neurons project into the interpeduncular nucleus (IPN) where expression often overlaps with galr2a and galr2b. Weakly expressed in the liver, intestine, kidney, heart and gill.

Its subcellular location is the secreted. The protein resides in the extracellular space. It is found in the cytoplasmic vesicle. It localises to the secretory vesicle. Plays a role in the regulation of food intake and energy metabolism. May also be involved in suppressing the anxiety response by promoting the expression of serotonin-related genes such as fev, tph2 and slc6a4a. Its function is as follows. Acts as a ligand for galanin receptors galr2a and galr2b. Brain administration of the peptide inhibits food consumption and elevates levels of glucose, triacylglycerol and cholesterol in the serum. Likely to control food intake by regulating appetite related genes which includes the negative regulation of the orexigenic factor agrp. By controlling food intake it may act as a satiety factor in energy metabolism. This chain is Spexin prohormone 1 (spx), found in Danio rerio (Zebrafish).